Consider the following 859-residue polypeptide: Protein EFR3 homolog (859 aa).

Disordered regions lie at residues 638–657 and 697–724; these read DDPL…TPRT and RDGN…PDGY. The segment covering 704-722 has biased composition (basic and acidic residues); sequence WQREDGQNFDSTDGRESPD.

The protein belongs to the EFR3 family.

The protein is Protein EFR3 homolog of Caenorhabditis briggsae.